The following is a 275-amino-acid chain: MAPIGDDATQTLHDLVNKLESRVKELEDKLAHAAGGSAPSSSEGIRMILMGPPGAGKGTQAPKIKEKFSCCHLATGDMLRSQVAKKTPLGREAKKIMDQGGLVSDEIVIGMIKAELETNQECKGGFILDGFPRTVVQAERLDAMLSARNQKLQHAVELQIDDSLLVSRITGRLVHPASGRSYHRVFNPPKAEMKDDITGEPLVSRSDDNAEALKKRLVTYHDQTAPVVGYYQKTGIWSGIDASQEPGAVWKSLLGVFDKQKAPSGSLLSKITGRS.

Position 54 to 59 (54 to 59 (GAGKGT)) interacts with ATP. The interval 74–103 (ATGDMLRSQVAKKTPLGREAKKIMDQGGLV) is NMP. AMP contacts are provided by residues Thr-75, Arg-80, 101 to 103 (GLV), 130 to 133 (GFPR), and Gln-137. The LID stretch occupies residues 171–208 (GRLVHPASGRSYHRVFNPPKAEMKDDITGEPLVSRSDD). ATP is bound by residues Arg-172 and 181-182 (SY). AMP contacts are provided by Arg-205 and Arg-216. ATP is bound at residue Gln-244.

This sequence belongs to the adenylate kinase family. AK2 subfamily. Monomer.

It is found in the cytoplasm. The protein localises to the cytosol. The protein resides in the mitochondrion intermembrane space. The catalysed reaction is AMP + ATP = 2 ADP. Its function is as follows. Catalyzes the reversible transfer of the terminal phosphate group between ATP and AMP. Plays an important role in cellular energy homeostasis and in adenine nucleotide metabolism. Adenylate kinase activity is critical for regulation of the phosphate utilization and the AMP de novo biosynthesis pathways. The polypeptide is Adenylate kinase (adk1) (Sclerotinia sclerotiorum (strain ATCC 18683 / 1980 / Ss-1) (White mold)).